The sequence spans 201 residues: Glycerol-3-phosphate acyltransferase (201 aa).

The next 4 helical transmembrane spans lie at 4–24 (IASL…LVSL), 84–104 (EIAM…FLAF), 116–136 (VLLA…LAVA), and 157–177 (AWFI…LLLV).

The protein belongs to the PlsY family. As to quaternary structure, probably interacts with PlsX.

It is found in the cell inner membrane. The catalysed reaction is an acyl phosphate + sn-glycerol 3-phosphate = a 1-acyl-sn-glycero-3-phosphate + phosphate. Its pathway is lipid metabolism; phospholipid metabolism. In terms of biological role, catalyzes the transfer of an acyl group from acyl-phosphate (acyl-PO(4)) to glycerol-3-phosphate (G3P) to form lysophosphatidic acid (LPA). This enzyme utilizes acyl-phosphate as fatty acyl donor, but not acyl-CoA or acyl-ACP. The chain is Glycerol-3-phosphate acyltransferase from Laribacter hongkongensis (strain HLHK9).